We begin with the raw amino-acid sequence, 356 residues long: Tyrosine recombinase XerS (356 aa).

One can recognise a Core-binding (CB) domain in the interval 16-121; it reads IMPWYVLDYY…ALSSLYKYLT (106 aa). The Tyr recombinase domain occupies 169 to 354; that stretch reads AFLDYVDKEY…VNDEQKNALD (186 aa). Residues Arg-210, Lys-234, His-306, Arg-309, and His-332 contribute to the active site. The active-site O-(3'-phospho-DNA)-tyrosine intermediate is Tyr-341.

Belongs to the 'phage' integrase family. XerS subfamily.

The protein resides in the cytoplasm. Its activity is regulated as follows. FtsK is required for recombination. In terms of biological role, site-specific tyrosine recombinase, which acts by catalyzing the cutting and rejoining of the recombining DNA molecules. Essential to convert dimers of the bacterial chromosome into monomers to permit their segregation at cell division. This Streptococcus pyogenes serotype M1 protein is Tyrosine recombinase XerS.